We begin with the raw amino-acid sequence, 96 residues long: (4S)-4-hydroxy-5-phosphonooxypentane-2,3-dione isomerase (96 aa).

The 90-residue stretch at 2–91 folds into the ABM domain; it reads HVTLVEINVK…MTGPRKKTVF (90 aa).

The protein belongs to the LsrG family. Homodimer.

It is found in the cytoplasm. The catalysed reaction is (2S)-2-hydroxy-3,4-dioxopentyl phosphate = 3-hydroxy-2,4-dioxopentyl phosphate. In terms of biological role, involved in the degradation of phospho-AI-2, thereby terminating induction of the lsr operon and closing the AI-2 signaling cycle. Catalyzes the conversion of (4S)-4-hydroxy-5-phosphonooxypentane-2,3-dione (P-DPD) to 3-hydroxy-5-phosphonooxypentane-2,4-dione (P-HPD). The polypeptide is (4S)-4-hydroxy-5-phosphonooxypentane-2,3-dione isomerase (Yersinia pseudotuberculosis serotype O:1b (strain IP 31758)).